Consider the following 160-residue polypeptide: M-phase phosphoprotein 6 (160 aa).

Residues Lys37 and Lys86 each participate in a glycyl lysine isopeptide (Lys-Gly) (interchain with G-Cter in SUMO2) cross-link. Ser110 is modified (phosphoserine). The Nuclear localization signal signature appears at Arg116 to Arg133. Lys127 participates in a covalent cross-link: Glycyl lysine isopeptide (Lys-Gly) (interchain with G-Cter in SUMO2). Position 147 is a phosphothreonine (Thr147). Residues Lys150 and Lys153 each participate in a glycyl lysine isopeptide (Lys-Gly) (interchain with G-Cter in SUMO2) cross-link.

It belongs to the MPP6 family. In terms of assembly, associates with the RNA exosome complex, mediated by EXOSC3. Interacts with ARHGAP18. Interacts with exosome cofactors EXOSC10 and MTREX. Phosphorylated in M (mitotic) phase.

It localises to the nucleus. The protein localises to the nucleolus. The protein resides in the cytoplasm. In terms of biological role, RNA-binding protein that associates with the RNA exosome complex. Involved in the 3'-processing of the 7S pre-RNA to the mature 5.8S rRNA and play a role in recruiting the RNA exosome complex to pre-rRNA; this function may include C1D. This is M-phase phosphoprotein 6 from Homo sapiens (Human).